Here is a 188-residue protein sequence, read N- to C-terminus: Phosphoribosylglycinamide formyltransferase (188 aa).

A N(1)-(5-phospho-beta-D-ribosyl)glycinamide-binding site is contributed by Gly-12 to Asn-14. (6R)-10-formyltetrahydrofolate-binding positions include Lys-66, Met-91–Val-94, and Asn-108. His-110 (proton donor) is an active-site residue.

The protein belongs to the GART family.

It catalyses the reaction N(1)-(5-phospho-beta-D-ribosyl)glycinamide + (6R)-10-formyltetrahydrofolate = N(2)-formyl-N(1)-(5-phospho-beta-D-ribosyl)glycinamide + (6S)-5,6,7,8-tetrahydrofolate + H(+). It functions in the pathway purine metabolism; IMP biosynthesis via de novo pathway; N(2)-formyl-N(1)-(5-phospho-D-ribosyl)glycinamide from N(1)-(5-phospho-D-ribosyl)glycinamide (10-formyl THF route): step 1/1. In terms of biological role, catalyzes the transfer of a formyl group from 10-formyltetrahydrofolate to 5-phospho-ribosyl-glycinamide (GAR), producing 5-phospho-ribosyl-N-formylglycinamide (FGAR) and tetrahydrofolate. This is Phosphoribosylglycinamide formyltransferase from Staphylococcus epidermidis (strain ATCC 35984 / DSM 28319 / BCRC 17069 / CCUG 31568 / BM 3577 / RP62A).